The primary structure comprises 309 residues: Protein RTM1 (309 aa).

Transmembrane regions (helical) follow at residues 22-42 (AIAL…QVVW), 83-103 (TFSA…GYIA), 119-139 (IQAV…YMLF), 162-182 (FFVF…GLMA), 193-213 (LITA…INEF), 233-253 (WWFL…RSIV), and 278-298 (AVPM…GNIF).

It belongs to the lipid-translocating exporter (LTE) (TC 9.A.26.1) family.

It is found in the membrane. In terms of biological role, confers resistance to molasses (to a particular toxic element present in some molasses). The sequence is that of Protein RTM1 (RTM1) from Saccharomyces cerevisiae (Baker's yeast).